Consider the following 550-residue polypeptide: Hydroxylamine reductase (550 aa).

Residues Cys3, Cys6, Cys18, and Cys25 each coordinate [2Fe-2S] cluster. Hybrid [4Fe-2O-2S] cluster is bound by residues His249, Glu273, Cys317, Cys405, Cys433, Cys458, Glu492, and Lys494. Residue Cys405 is modified to Cysteine persulfide.

It belongs to the HCP family. [2Fe-2S] cluster is required as a cofactor. Requires hybrid [4Fe-2O-2S] cluster as cofactor.

Its subcellular location is the cytoplasm. It catalyses the reaction A + NH4(+) + H2O = hydroxylamine + AH2 + H(+). In terms of biological role, catalyzes the reduction of hydroxylamine to form NH(3) and H(2)O. This Salmonella schwarzengrund (strain CVM19633) protein is Hydroxylamine reductase.